A 431-amino-acid chain; its full sequence is 3-isopropylmalate dehydratase large subunit (431 aa).

3 residues coordinate [4Fe-4S] cluster: C308, C368, and C371.

It belongs to the aconitase/IPM isomerase family. LeuC type 2 subfamily. As to quaternary structure, heterodimer of LeuC and LeuD. [4Fe-4S] cluster is required as a cofactor.

It catalyses the reaction (2R,3S)-3-isopropylmalate = (2S)-2-isopropylmalate. The protein operates within amino-acid biosynthesis; L-leucine biosynthesis; L-leucine from 3-methyl-2-oxobutanoate: step 2/4. Its function is as follows. Catalyzes the isomerization between 2-isopropylmalate and 3-isopropylmalate, via the formation of 2-isopropylmaleate. The protein is 3-isopropylmalate dehydratase large subunit of Desulfosudis oleivorans (strain DSM 6200 / JCM 39069 / Hxd3) (Desulfococcus oleovorans).